The following is an 885-amino-acid chain: Alanine--tRNA ligase (885 aa).

Residues histidine 563, histidine 567, cysteine 677, and histidine 681 each contribute to the Zn(2+) site. The tract at residues 848–868 (LGGKGGGGRPDRAQGGAPSLA) is disordered.

Belongs to the class-II aminoacyl-tRNA synthetase family. Zn(2+) serves as cofactor.

It is found in the cytoplasm. The enzyme catalyses tRNA(Ala) + L-alanine + ATP = L-alanyl-tRNA(Ala) + AMP + diphosphate. In terms of biological role, catalyzes the attachment of alanine to tRNA(Ala) in a two-step reaction: alanine is first activated by ATP to form Ala-AMP and then transferred to the acceptor end of tRNA(Ala). Also edits incorrectly charged Ser-tRNA(Ala) and Gly-tRNA(Ala) via its editing domain. In Paracoccus denitrificans (strain Pd 1222), this protein is Alanine--tRNA ligase.